The sequence spans 336 residues: Delta(1)-pyrroline-2-carboxylate reductase (336 aa).

Serine 47 acts as the Charge relay system in catalysis. Histidine 48 (proton donor) is an active-site residue. Arginine 52 provides a ligand contact to substrate. Residue 120–124 participates in NADP(+) binding; the sequence is HFSAL. A substrate-binding site is contributed by threonine 160. An NADP(+)-binding site is contributed by 178 to 180; it reads DFA. Substrate is bound at residue 186-187; that stretch reads RG. Aspartate 188 serves as the catalytic Charge relay system. Residues 229–230 and 304–310 each bind NADP(+); these read HK and RLPSQRR.

This sequence belongs to the LDH2/MDH2 oxidoreductase family. As to quaternary structure, homodimer.

The catalysed reaction is L-proline + NAD(+) = 1-pyrroline-2-carboxylate + NADH + H(+). The enzyme catalyses L-proline + NADP(+) = 1-pyrroline-2-carboxylate + NADPH + H(+). Functionally, catalyzes the reduction of Delta(1)-pyrroline-2-carboxylate (Pyr2C) to L-proline, using NADPH as the electron donor. May be involved in a degradation pathway that converts trans-3-hydroxy-L-proline (t3LHyp) to L-proline. This is Delta(1)-pyrroline-2-carboxylate reductase from Pseudomonas fluorescens (strain ATCC BAA-477 / NRRL B-23932 / Pf-5).